Reading from the N-terminus, the 127-residue chain is Small ribosomal subunit protein uS12m (127 aa).

Belongs to the universal ribosomal protein uS12 family.

The protein localises to the mitochondrion. Its function is as follows. Protein S12 is involved in the translation initiation step. This is Small ribosomal subunit protein uS12m (RPS12) from Chondrus crispus (Carrageen Irish moss).